The primary structure comprises 139 residues: Peptide methionine sulfoxide reductase MsrB (139 aa).

Residues 14–137 (DEEWRRELTP…NSISLDFQPE (124 aa)) form the MsrB domain. Residues Cys-53, Cys-56, Cys-102, and Cys-105 each coordinate Zn(2+). Cys-126 (nucleophile) is an active-site residue.

Belongs to the MsrB Met sulfoxide reductase family. Requires Zn(2+) as cofactor.

The catalysed reaction is L-methionyl-[protein] + [thioredoxin]-disulfide + H2O = L-methionyl-(R)-S-oxide-[protein] + [thioredoxin]-dithiol. This chain is Peptide methionine sulfoxide reductase MsrB, found in Leifsonia xyli subsp. xyli (strain CTCB07).